Reading from the N-terminus, the 510-residue chain is Calcium-dependent lipid-binding protein (510 aa).

A helical transmembrane segment spans residues 1–21 (MGLISGILFGIIFGVALMAGW). SMP-LTD domains follow at residues 66-248 (AFEQ…VPIG) and 66-250 (AFEQ…IGGI). The interval 226–488 (DDTVDTIVKD…FMGRTITGQS (263 aa)) is phospholipid binding. 2 C2 domains span residues 242–362 (RIVV…ELEL) and 246–364 (PIGG…ELNL). Ca(2+) contacts are provided by Lys-278, Glu-279, Asp-285, Asp-333, Lys-334, Asp-335, Asp-339, and Glu-340. The stretch at 390–417 (EFNKEEQMAALEDEKKIMEERKRLKEAG) forms a coiled coil. Positions 461-500 (MVGSGFGAVGSGLSKAGRFMGRTITGQSSKRSGSSTPVNT) constitute a C2 3 domain. The tract at residues 484 to 510 (ITGQSSKRSGSSTPVNTVPENDGAKQQ) is disordered.

The protein belongs to the synaptotagmin family. As to quaternary structure, interacts with the biotrophic pathogenic fungi Microbotryum violaceum effector MVLG_01732. Ca(2+) is required as a cofactor. Mostly expressed in rosette leaves and flowers, to lower extent, in cauline leaves, roots and stems, and, at low levels, in siliques.

The protein resides in the nucleus membrane. May be involved in membrane trafficking. Acts as a repressor of abiotic stress (e.g. drought and salt) responses by binding specifically to the promoter of THAS1 to regulate its transcription. Binds to membrane lipid ceramides. This Arabidopsis thaliana (Mouse-ear cress) protein is Calcium-dependent lipid-binding protein.